The primary structure comprises 172 residues: Protein PLASTID REDOX INSENSITIVE 2, chloroplastic (172 aa).

A chloroplast-targeting transit peptide spans 1–54; the sequence is MAARLWAAAVAPATLNPPLLTLSASSSPSSSRLRRSVLGRLRSRAPRPADFVCR.

The protein localises to the plastid. The protein resides in the chloroplast stroma. Its subcellular location is the chloroplast nucleoid. Required for the activity of the plastid-encoded RNA polymerase (PEP) and full expression of genes transcribed by PEP. This is Protein PLASTID REDOX INSENSITIVE 2, chloroplastic from Oryza sativa subsp. japonica (Rice).